We begin with the raw amino-acid sequence, 327 residues long: MKKDAENENLLHAYEHDEQSSKYFIKPDSRYSIDDDISVKIDGKQLEVRKWPTLLATAMVGVGWLSNEVALAWVHERVPDDYHPLPDLFFSHFPEIRGAIRIAEYIMMILLISALLVMFTHQHRWIVIRRVFFCIAMAYSFRALCVTIFQVPVPSINTYCAPKSNSSLELVAGRVVKMFWSAGIEQLRPRELCGDLIVSGHTLTIFTAFLVFKTYAPQRLQPLSHIYHVLAFTALFSILLARKHYMIDIVLGYTVSTRIFMEYHALAASYHNRTFETNPLAWSFWSFFIPIFECDAPANMHNHLLLYNRSTSSKNVSTLKKSRRSFE.

5 consecutive transmembrane segments (helical) span residues 54–74 (LLATAMVGVGWLSNEVALAWV), 99–119 (AIRIAEYIMMILLISALLVMF), 131–151 (VFFCIAMAYSFRALCVTIFQV), 192–212 (LCGDLIVSGHTLTIFTAFLVF), and 220–240 (LQPLSHIYHVLAFTALFSILL). Residue histidine 201 is part of the active site. The Cytoplasmic portion of the chain corresponds to 241–327 (ARKHYMIDIV…TLKKSRRSFE (87 aa)). Residues histidine 244 and aspartate 248 contribute to the active site.

Belongs to the sphingomyelin synthase family.

Its subcellular location is the membrane. This chain is Sphingomyelin synthase-related 2, found in Caenorhabditis elegans.